The primary structure comprises 666 residues: N-acetylgalactosaminyltransferase 6 (666 aa).

The Cytoplasmic segment spans residues 1 to 11 (MRRPNLKWIVK). A helical; Signal-anchor for type II membrane protein transmembrane segment spans residues 12–31 (ASLLLLISLTLFVLITSWIS). Residues 32 to 666 (STPYTNKPVH…NYSQDLVLSL (635 aa)) lie on the Lumenal side of the membrane. Residues 90–126 (EPVEEEVDNPHPADDEPQQQPQEELQMAAPADASVKK) are disordered. Residues 107–120 (QQQPQEELQMAAPA) show a composition bias toward low complexity. Asn-181 carries N-linked (GlcNAc...) asparagine glycosylation. 5 disulfide bridges follow: Cys-192/Cys-421, Cys-412/Cys-491, Cys-531/Cys-548, Cys-577/Cys-594, and Cys-621/Cys-636. Positions 201–311 (LPTVSVIIIF…YNWLPPLLEP (111 aa)) are catalytic subdomain A. 2 residues coordinate substrate: Asp-242 and Arg-272. The N-linked (GlcNAc...) asparagine glycan is linked to Asn-285. Position 295 (Asp-295) interacts with Mn(2+). Position 296 (Ser-296) interacts with substrate. Residue His-297 participates in Mn(2+) binding. Residues 367-429 (PFKSPIMAGG…PCSRIGHIYR (63 aa)) are catalytic subdomain B. Trp-398 contributes to the substrate binding site. His-426 is a binding site for Mn(2+). A substrate-binding site is contributed by Arg-429. The region spanning 518–648 (AMGALQNVGN…DNRFQQWNFG (131 aa)) is the Ricin B-type lectin domain. Asn-651 and Asn-657 each carry an N-linked (GlcNAc...) asparagine glycan.

Belongs to the glycosyltransferase 2 family. GalNAc-T subfamily. It depends on Mn(2+) as a cofactor. In terms of tissue distribution, expressed during oogenesis, in the somatically derived follicle cells that surround the developing oocyte, which are involved in the maturation of the oocyte and construction of the egg shell, as well as playing a role in subsequent embryonic pattern formation. Expressed in the salivary glands from embryonic stage 12 onwards, becoming stronger at stage 13. During embryonic stages 12-13, also expressed in the posterior midgut and hindgut. During embryonic stages 14-15, expression continues in the hindgut. Expression is detected in the epidermis and antennomaxillary complex during embryonic stages 16-17. In third instar larvae, ubiquitously expressed in wing, eye-antennal, leg and haltere imaginal disks.

Its subcellular location is the golgi apparatus membrane. The enzyme catalyses L-seryl-[protein] + UDP-N-acetyl-alpha-D-galactosamine = a 3-O-[N-acetyl-alpha-D-galactosaminyl]-L-seryl-[protein] + UDP + H(+). The catalysed reaction is L-threonyl-[protein] + UDP-N-acetyl-alpha-D-galactosamine = a 3-O-[N-acetyl-alpha-D-galactosaminyl]-L-threonyl-[protein] + UDP + H(+). Its pathway is protein modification; protein glycosylation. Functionally, glycopeptide transferase involved in O-linked oligosaccharide biosynthesis, which catalyzes the transfer of an N-acetyl-D-galactosamine residue to an already glycosylated peptide. In contrast to other proteins of the family, it does not act as a peptide transferase that transfers GalNAc onto serine or threonine residue on the protein receptor, but instead requires the prior addition of a GalNAc on a peptide before adding additional GalNAc moieties. Some peptide transferase activity is however not excluded, considering that its appropriate peptide substrate may remain unidentified. Prefers the diglycosylated Muc5AC-3/13 as substrate. Might have a role in protein O-glycosylation in the Golgi and thereby in establishing and/or maintaining a proper secretory apparatus structure. The chain is N-acetylgalactosaminyltransferase 6 from Drosophila melanogaster (Fruit fly).